The sequence spans 320 residues: Cytochrome c biogenesis protein CcsA (320 aa).

7 consecutive transmembrane segments (helical) span residues 14 to 34 (VLLL…WCFW), 68 to 88 (GHFP…ACTL), 101 to 121 (LVAA…SFAL), 146 to 166 (VIMV…AVLM), 226 to 246 (TITV…VWAN), 260 to 277 (TWAL…HTRL), and 289 to 309 (VASL…LLGI).

It belongs to the CcmF/CycK/Ccl1/NrfE/CcsA family. May interact with ccs1.

The protein localises to the cellular thylakoid membrane. Required during biogenesis of c-type cytochromes (cytochrome c6 and cytochrome f) at the step of heme attachment. This is Cytochrome c biogenesis protein CcsA from Synechococcus sp. (strain WH7803).